The following is a 456-amino-acid chain: Bifunctional protein GlmU (456 aa).

The segment at 1-231 is pyrophosphorylase; that stretch reads MERTCLAIIL…EEELTGCNTR (231 aa). UDP-N-acetyl-alpha-D-glucosamine contacts are provided by residues 10–13, K24, Q77, and 82–83; these read LAAG and GT. A Mg(2+)-binding site is contributed by D107. UDP-N-acetyl-alpha-D-glucosamine contacts are provided by G143, E157, N172, and N229. N229 contributes to the Mg(2+) binding site. Residues 232–252 are linker; it reads AELAYIERLWQQRRRHELMLA. The segment at 253 to 456 is N-acetyltransferase; the sequence is GVSMVAPETV…LARKIAKAAE (204 aa). UDP-N-acetyl-alpha-D-glucosamine contacts are provided by R318 and K336. Residue H348 is the Proton acceptor of the active site. Residues Y351 and N362 each coordinate UDP-N-acetyl-alpha-D-glucosamine. Acetyl-CoA-binding positions include A365, 371–372, S390, S408, and R425; that span reads NY.

This sequence in the N-terminal section; belongs to the N-acetylglucosamine-1-phosphate uridyltransferase family. In the C-terminal section; belongs to the transferase hexapeptide repeat family. In terms of assembly, homotrimer. Requires Mg(2+) as cofactor.

It is found in the cytoplasm. The catalysed reaction is alpha-D-glucosamine 1-phosphate + acetyl-CoA = N-acetyl-alpha-D-glucosamine 1-phosphate + CoA + H(+). The enzyme catalyses N-acetyl-alpha-D-glucosamine 1-phosphate + UTP + H(+) = UDP-N-acetyl-alpha-D-glucosamine + diphosphate. The protein operates within nucleotide-sugar biosynthesis; UDP-N-acetyl-alpha-D-glucosamine biosynthesis; N-acetyl-alpha-D-glucosamine 1-phosphate from alpha-D-glucosamine 6-phosphate (route II): step 2/2. Its pathway is nucleotide-sugar biosynthesis; UDP-N-acetyl-alpha-D-glucosamine biosynthesis; UDP-N-acetyl-alpha-D-glucosamine from N-acetyl-alpha-D-glucosamine 1-phosphate: step 1/1. It participates in bacterial outer membrane biogenesis; LPS lipid A biosynthesis. In terms of biological role, catalyzes the last two sequential reactions in the de novo biosynthetic pathway for UDP-N-acetylglucosamine (UDP-GlcNAc). The C-terminal domain catalyzes the transfer of acetyl group from acetyl coenzyme A to glucosamine-1-phosphate (GlcN-1-P) to produce N-acetylglucosamine-1-phosphate (GlcNAc-1-P), which is converted into UDP-GlcNAc by the transfer of uridine 5-monophosphate (from uridine 5-triphosphate), a reaction catalyzed by the N-terminal domain. This Sinorhizobium medicae (strain WSM419) (Ensifer medicae) protein is Bifunctional protein GlmU.